The chain runs to 500 residues: Probable cytosol aminopeptidase (500 aa).

Mn(2+)-binding residues include K265 and D270. Residue K277 is part of the active site. D288, D347, and E349 together coordinate Mn(2+). R351 is an active-site residue.

This sequence belongs to the peptidase M17 family. Mn(2+) serves as cofactor.

The protein resides in the cytoplasm. It catalyses the reaction Release of an N-terminal amino acid, Xaa-|-Yaa-, in which Xaa is preferably Leu, but may be other amino acids including Pro although not Arg or Lys, and Yaa may be Pro. Amino acid amides and methyl esters are also readily hydrolyzed, but rates on arylamides are exceedingly low.. The enzyme catalyses Release of an N-terminal amino acid, preferentially leucine, but not glutamic or aspartic acids.. Its function is as follows. Presumably involved in the processing and regular turnover of intracellular proteins. Catalyzes the removal of unsubstituted N-terminal amino acids from various peptides. This Rickettsia africae (strain ESF-5) protein is Probable cytosol aminopeptidase.